The primary structure comprises 509 residues: Light-independent protochlorophyllide reductase subunit B (509 aa).

[4Fe-4S] cluster is bound at residue aspartate 36. Catalysis depends on aspartate 298, which acts as the Proton donor. Glycine 433–methionine 434 is a binding site for substrate.

This sequence belongs to the ChlB/BchB/BchZ family. Protochlorophyllide reductase is composed of three subunits; ChlL, ChlN and ChlB. Forms a heterotetramer of two ChlB and two ChlN subunits. It depends on [4Fe-4S] cluster as a cofactor.

Its subcellular location is the plastid. The protein localises to the chloroplast. The enzyme catalyses chlorophyllide a + oxidized 2[4Fe-4S]-[ferredoxin] + 2 ADP + 2 phosphate = protochlorophyllide a + reduced 2[4Fe-4S]-[ferredoxin] + 2 ATP + 2 H2O. Its pathway is porphyrin-containing compound metabolism; chlorophyll biosynthesis (light-independent). Its function is as follows. Component of the dark-operative protochlorophyllide reductase (DPOR) that uses Mg-ATP and reduced ferredoxin to reduce ring D of protochlorophyllide (Pchlide) to form chlorophyllide a (Chlide). This reaction is light-independent. The NB-protein (ChlN-ChlB) is the catalytic component of the complex. This chain is Light-independent protochlorophyllide reductase subunit B, found in Ephedra altissima (High-climbing jointfir).